A 440-amino-acid polypeptide reads, in one-letter code: Kinetochore protein NUF2 homolog (440 aa).

2 coiled-coil regions span residues 142–239 and 299–386; these read LGLL…LRSQ and INEQ…RQTN.

It belongs to the NUF2 family. In terms of assembly, component of the NDC80 complex, which consists of NDC80, NUF2, SPC24 and SPC25.

The protein resides in the chromosome. It localises to the centromere. Acts as a component of the essential kinetochore-associated NDC80 complex, which is required for chromosome segregation and spindle checkpoint activity to ensure proper cell division. The sequence is that of Kinetochore protein NUF2 homolog from Arabidopsis thaliana (Mouse-ear cress).